Here is a 258-residue protein sequence, read N- to C-terminus: Zinc import ATP-binding protein ZnuC (258 aa).

One can recognise an ABC transporter domain in the interval 7 to 233; that stretch reads ITAKNINHAY…PAFQELFGQG (227 aa). Residue 39–46 participates in ATP binding; it reads GPNGAGKS.

The protein belongs to the ABC transporter superfamily. Zinc importer (TC 3.A.1.15.5) family. In terms of assembly, the complex is composed of two ATP-binding proteins (ZnuC), two transmembrane proteins (ZnuB) and a solute-binding protein (ZnuA).

The protein localises to the cell inner membrane. The catalysed reaction is Zn(2+)(out) + ATP(in) + H2O(in) = Zn(2+)(in) + ADP(in) + phosphate(in) + H(+)(in). Functionally, part of the ABC transporter complex ZnuABC involved in zinc import. Responsible for energy coupling to the transport system. This Hydrogenovibrio crunogenus (strain DSM 25203 / XCL-2) (Thiomicrospira crunogena) protein is Zinc import ATP-binding protein ZnuC.